Reading from the N-terminus, the 282-residue chain is Transmembrane protein 41B (282 aa).

The disordered stretch occupies residues 1–36 (MAKKRAGNRETESSPLVEQEPRPSKETPVPKGAQSP). 6 helical membrane-spanning segments follow: residues 43–63 (MSILLLVVIFACSACVMYLVF), 102–122 (TQVLLAYFATYIFLQTFAIPG), 138–160 (LALFLVCLCSGLGASFCYMLSYL), 188–208 (LINYIIFLRITPFLPNWFINI), 216–236 (PLGVFFLGTFLGVAPPSFVAI), and 251–271 (AVSWNSLLVLGVLAVVSILPV). Residues 131–242 (GYLYPFPLAL…FVAINAGTTL (112 aa)) are VTT domain; required for its function in autophagy.

It belongs to the TMEM41 family.

Its subcellular location is the endoplasmic reticulum membrane. The protein resides in the endomembrane system. It carries out the reaction a 1,2-diacyl-sn-glycero-3-phospho-L-serine(in) = a 1,2-diacyl-sn-glycero-3-phospho-L-serine(out). The catalysed reaction is cholesterol(in) = cholesterol(out). It catalyses the reaction a 1,2-diacyl-sn-glycero-3-phosphocholine(in) = a 1,2-diacyl-sn-glycero-3-phosphocholine(out). The enzyme catalyses a 1,2-diacyl-sn-glycero-3-phosphoethanolamine(in) = a 1,2-diacyl-sn-glycero-3-phosphoethanolamine(out). Functionally, phospholipid scramblase involved in lipid homeostasis and membrane dynamics processes. Has phospholipid scramblase activity toward cholesterol and phosphatidylserine, as well as phosphatidylethanolamine and phosphatidylcholine. Required for autophagosome formation: participates in early stages of autophagosome biogenesis at the endoplasmic reticulum (ER) membrane by reequilibrating the leaflets of the ER as lipids are extracted by atg2 (atg2a or atg2b) to mediate autophagosome assembly. In addition to autophagy, involved in other processes in which phospholipid scramblase activity is required. Required for normal motor neuron development. In Danio rerio (Zebrafish), this protein is Transmembrane protein 41B.